The primary structure comprises 1209 residues: Calcium-activated potassium channel subunit alpha-1 (1209 aa).

The span at 1–23 shows a compositional bias: gly residues; sequence MANGGGGGGGSSGGGGGGGGGSG. The disordered stretch occupies residues 1 to 61; that stretch reads MANGGGGGGG…SSSSSSSSSV (61 aa). Over 1–86 the chain is Extracellular; sequence MANGGGGGGG…VPCDSRGQRM (86 aa). Residues 25 to 39 show a composition bias toward polar residues; that stretch reads RMSSNIHANNLSLDA. The segment covering 40-60 has biased composition (low complexity); sequence SSSSSSSSSSSSSSSSSSSSS. A helical membrane pass occupies residues 87–107; sequence WWAFLASSMVTFFGGLFIILL. Over 108–178 the chain is Cytoplasmic; the sequence is WRTLKYLWTV…MISAQTLTGR (71 aa). S-palmitoyl cysteine attachment occurs at residues Cys-118, Cys-119, and Cys-121. Residues 179–199 traverse the membrane as a helical segment; it reads VLVVLVFALSIGALVIYFIDS. At 200-214 the chain is on the extracellular side; the sequence is SNPIESCQNFYKDFT. Residues 215–235 form a helical membrane-spanning segment; that stretch reads LQIDMAFNVFFLLYFGLRFIA. At 236 to 239 the chain is on the cytoplasmic side; it reads ANDK. The chain crosses the membrane as a helical span at residues 240–260; the sequence is LWFWLEVNSVVDFFTVPPVFV. Residues 261-264 are Extracellular-facing; it reads SVYL. Residues 265–285 form a helical; Voltage-sensor membrane-spanning segment; the sequence is NRSWLGLRFLRALRLIQFSEI. Topologically, residues 286 to 300 are cytoplasmic; that stretch reads LQFLNILKTSNSIKL. A helical membrane pass occupies residues 301-321; it reads VNLLSIFISTWLTAAGFIHLV. The Extracellular portion of the chain corresponds to 322-335; sequence ENSGDPWENFQNNQ. The pore-forming intramembrane region spans 336–358; that stretch reads ALTYWECVYLLMVTMSTVGYGDV. The Selectivity for potassium motif lies at 352–355; the sequence is TVGY. Residues 359–367 lie on the Extracellular side of the membrane; it reads YAKTTLGRL. Residues 368–388 form a helical membrane-spanning segment; the sequence is FMVFFILGGLAMFASYVPEII. Residues 389 to 1209 are Cytoplasmic-facing; the sequence is ELIGNRKKYG…KQNRKEMVYR (821 aa). An RCK N-terminal 1 domain is found at 407–549; that stretch reads RKHIVVCGHI…WNWKEGDDAI (143 aa). Residues Glu-439, Gln-462, and Glu-464 each contribute to the Mg(2+) site. Positions 556–576 are segment S7; sequence LGFIAQSCLAQGLSTMLANLF. The segment S8 stretch occupies residues 613–633; that stretch reads LSFPTVCELCFVKLKLLMIAI. Phosphothreonine is present on Asp-670. Position 672 is a phosphoserine (Lys-672). The interval 681 to 685 is heme-binding motif; it reads CKACH. The tract at residues 703–733 is disordered; the sequence is EDEQPPTLSPKKKQRNGGMRNSPNTSPKLMR. Thr-709 bears the Phosphothreonine mark. Ser-711, Ser-724, and Ser-728 each carry phosphoserine. The segment S9 stretch occupies residues 783–803; it reads VLSGHVVVCIFGDVSSALIGL. The region spanning 785 to 929 is the RCK N-terminal 2 domain; that stretch reads SGHVVVCIFG…MDRSSPDNSP (145 aa). Position 916 is a phosphothreonine (Thr-916). A phosphoserine mark is found at Ser-924 and Ser-928. A Calcium bowl motif is present at residues 976 to 998; sequence TELVNDTNVQFLDQDDDDDPDTE. The Ca(2+) site is built by Gln-985, Asp-988, Asp-991, and Asp-993. The segment at 1005 to 1025 is segment S10; sequence FACGTAFAVSVLDSLMSATYF. The segment covering 1159 to 1184 has biased composition (low complexity); it reads RASLSHSSHSSQSSSKKSSSVHSIPS. A disordered region spans residues 1159 to 1209; the sequence is RASLSHSSHSSQSSSKKSSSVHSIPSTANRPNRPKSRESRDKQNRKEMVYR. A compositionally biased stretch (basic and acidic residues) spans 1193–1209; it reads KSRESRDKQNRKEMVYR. 2 positions are modified to phosphoserine: Ser-1194 and Ser-1197.

This sequence belongs to the potassium channel family. Calcium-activated (TC 1.A.1.3) subfamily. KCa1.1/KCNMA1 sub-subfamily. In terms of assembly, homotetramer; which constitutes the calcium-activated potassium channel. Interacts with beta subunits KCNMB1, KCNMB2, KCNMB3 and KCNMB4. Interacts with gamma subunits LRRC26, LRRC38, LRRC52 and LRRC55. Beta and gamma subunits are accessory, and modulate its activity. Interacts with RAB11B. Phosphorylated. Phosphorylation by kinases such as PKA and/or PKG. In smooth muscles, phosphorylation affects its activity. Post-translationally, palmitoylation by ZDHHC22 and ZDHHC23 within the intracellular linker between the S0 and S1 transmembrane domains regulates localization to the plasma membrane. Depalmitoylated by LYPLA1 and LYPLAL1, leading to retard exit from the trans-Golgi network.

It localises to the cell membrane. It catalyses the reaction K(+)(in) = K(+)(out). With respect to regulation, ethanol and carbon monoxide-bound heme increase channel activation. Heme inhibits channel activation. Potassium channel activated by both membrane depolarization or increase in cytosolic Ca(2+) that mediates export of K(+). It is also activated by the concentration of cytosolic Mg(2+). Its activation dampens the excitatory events that elevate the cytosolic Ca(2+) concentration and/or depolarize the cell membrane. It therefore contributes to repolarization of the membrane potential. Plays a key role in controlling excitability in a number of systems, such as regulation of the contraction of smooth muscle, the tuning of hair cells in the cochlea, regulation of transmitter release, and innate immunity. In smooth muscles, its activation by high level of Ca(2+), caused by ryanodine receptors in the sarcoplasmic reticulum, regulates the membrane potential. In cochlea cells, its number and kinetic properties partly determine the characteristic frequency of each hair cell and thereby helps to establish a tonotopic map. Kinetics of KCNMA1 channels are determined by alternative splicing, phosphorylation status and its combination with modulating beta subunits. Highly sensitive to both iberiotoxin (IbTx) and charybdotoxin (CTX). Functionally, potassium channel activated by both membrane depolarization or increase in cytosolic Ca(2+) that mediates export of K(+). The polypeptide is Calcium-activated potassium channel subunit alpha-1 (Kcnma1) (Mus musculus (Mouse)).